Consider the following 404-residue polypeptide: Tryptophan synthase beta chain (404 aa).

K91 carries the post-translational modification N6-(pyridoxal phosphate)lysine.

The protein belongs to the TrpB family. Tetramer of two alpha and two beta chains. Pyridoxal 5'-phosphate serves as cofactor.

The enzyme catalyses (1S,2R)-1-C-(indol-3-yl)glycerol 3-phosphate + L-serine = D-glyceraldehyde 3-phosphate + L-tryptophan + H2O. It participates in amino-acid biosynthesis; L-tryptophan biosynthesis; L-tryptophan from chorismate: step 5/5. The beta subunit is responsible for the synthesis of L-tryptophan from indole and L-serine. This is Tryptophan synthase beta chain from Clavibacter michiganensis subsp. michiganensis (strain NCPPB 382).